We begin with the raw amino-acid sequence, 101 residues long: uncharacterized protein (101 aa).

Residues 1 to 11 (MSDEGYRELVE) show a composition bias toward basic and acidic residues. A disordered region spans residues 1–26 (MSDEGYRELVESKSAPTTPGPWSPDR).

This is an uncharacterized protein from Torque teno canis virus (isolate Cf-TTV10).